A 294-amino-acid polypeptide reads, in one-letter code: Large ribosomal subunit protein uL18A (294 aa).

A Phosphoserine modification is found at Ser-10. Tyr-12 carries the phosphotyrosine modification. The residue at position 81 (Ser-81) is a Phosphoserine.

Belongs to the universal ribosomal protein uL18 family. Component of the large ribosomal subunit (LSU). Mature yeast ribosomes consist of a small (40S) and a large (60S) subunit. The 40S small subunit contains 1 molecule of ribosomal RNA (18S rRNA) and 33 different proteins (encoded by 57 genes). The large 60S subunit contains 3 rRNA molecules (25S, 5.8S and 5S rRNA) and 46 different proteins (encoded by 81 genes). Component of a hexameric 5S RNP precursor complex, composed of 5S RNA, rrs1, rpf2, rpl5a/rpl5b, rpl11a/rpl11b and syo1; this complex acts as a precursor for ribosome assembly. rpl5a/rpl5b/uL18 forms a heterotrimeric complex with syo1 and rpl11a/rpl11b/uL5. Interaction of this complex with KAP104 allows the nuclear import of the heterotrimer.

The protein resides in the cytoplasm. It is found in the nucleus. Functionally, component of the ribosome, a large ribonucleoprotein complex responsible for the synthesis of proteins in the cell. The small ribosomal subunit (SSU) binds messenger RNAs (mRNAs) and translates the encoded message by selecting cognate aminoacyl-transfer RNA (tRNA) molecules. The large subunit (LSU) contains the ribosomal catalytic site termed the peptidyl transferase center (PTC), which catalyzes the formation of peptide bonds, thereby polymerizing the amino acids delivered by tRNAs into a polypeptide chain. The nascent polypeptides leave the ribosome through a tunnel in the LSU and interact with protein factors that function in enzymatic processing, targeting, and the membrane insertion of nascent chains at the exit of the ribosomal tunnel. The protein is Large ribosomal subunit protein uL18A (rpl501) of Schizosaccharomyces pombe (strain 972 / ATCC 24843) (Fission yeast).